The primary structure comprises 276 residues: Extracellular metalloprotease 1 (276 aa).

Residues 1-18 (MRVSVPVLALAFGSLAAA) form the signal peptide. H191 lines the Zn(2+) pocket. E192 is an active-site residue. H195 lines the Zn(2+) pocket. The segment at 211–233 (GDYVSDTPPQRSPSSGCPVGRDS) is disordered. C227 and C253 are joined by a disulfide.

Belongs to the peptidase M43B family.

It localises to the secreted. Its function is as follows. Secreted metalloproteinase that allows assimilation of proteinaceous substrates. Pays a pivotal role as a pathogenicity determinant during infections and contributes to the ability of the pathogen to persist within the mammalian host. Digests an immunodominant cell surface antigen (SOWgp) and prevents host recognition of endospores during the phase of development when these fungal cells are most vulnerable to phagocytic cell defenses. This Coccidioides posadasii (strain C735) (Valley fever fungus) protein is Extracellular metalloprotease 1 (MEP1).